The primary structure comprises 641 residues: Single-strand DNA endonuclease 1 (641 aa).

Residues 1–90 (MGVKNLWDIL…SLKLATYRRR (90 aa)) are N-domain. An XPG-N domain region spans residues 2 to 97 (GVKNLWDILE…RRRLGSISHA (96 aa)). Positions 30, 76, 144, 146, 165, 167, and 217 each coordinate Mg(2+). Positions 132–217 (MALGIPCLDG…ISLAVLLGSD (86 aa)) are XPG-I domain. I-domain regions lie at residues 132–220 (MALG…DYSN) and 132–221 (MALG…YSNG). The interval 217-350 (DYSNGVNGFG…ILPKIAEREL (134 aa)) is 5'-3' exonuclease domain. Disordered regions lie at residues 428–448 (KGEEKKQKRRARPKKSGQAAV) and 572–615 (VGSH…RVHH). Positions 580–590 (DGGGGGGGGVA) are enriched in gly residues.

The protein belongs to the XPG/RAD2 endonuclease family. GEN subfamily. Mg(2+) serves as cofactor. As to expression, highly expressed in shoot apical meristem (SAM) and young leaves. Expressed in roots, flag leaf and panicles.

Its subcellular location is the nucleus. Its function is as follows. Single-stranded DNA endonuclease activity in vitro. May not be active as double-stranded DNA endonuclease. Endonuclease which cleaves flap structures at the junction between single-stranded DNA and double-stranded DNA with a specific cleavage site in the 5' overhang strand exactly one nucleotide 3' of the branch point. Structure- and sequence-specific nuclease that resolves holliday junctions (HJs) by symmetrically oriented incisions in two opposing strands near the junction point, thus leading to ligatable products; HJs are physical links between homologous DNA molecules that arise as central intermediary structures during homologous recombination and repair in meiotic and somatic cells. Probably involved in the resolution of toxic replication structures to ensure genome stability, and to maintain telomere integrity and replication. The sequence is that of Single-strand DNA endonuclease 1 from Oryza sativa subsp. japonica (Rice).